The following is a 298-amino-acid chain: uncharacterized protein (298 aa).

10 helical membrane passes run 9-28 (GYVL…LYFK), 38-60 (IIVQ…WKHP), 72-94 (RFVV…VWAV), 104-121 (LGYY…MLLL), 128-145 (LQWL…QQVW), 150-167 (LPWV…YGLI), 174-196 (AALP…WLLF), 211-233 (PEAL…FNAA), 240-262 (ATLG…LLFG), and 272-291 (AFAF…WRSL). The EamA domain maps to 18-141 (VIWGLFPLYF…AVALASLGVA (124 aa)).

This sequence belongs to the EamA transporter family.

It is found in the cell membrane. This is an uncharacterized protein from Pseudomonas aeruginosa (strain ATCC 15692 / DSM 22644 / CIP 104116 / JCM 14847 / LMG 12228 / 1C / PRS 101 / PAO1).